The following is a 1479-amino-acid chain: Peroxidasin homolog (1479 aa).

The N-terminal stretch at Met1–Ala26 is a signal peptide. The region spanning Val27–Gln63 is the LRRNT domain. 2 disulfide bridges follow: Cys36–Cys42 and Cys40–Cys49. LRR repeat units follow at residues Ala61–Arg84, Leu85–Asp108, Glu110–Gly132, Leu133–His156, Leu157–His180, and Glu182–Ala204. The LRRCT domain occupies Asn192–Glu244. Disulfide bonds link Cys196/Cys243, Cys198/Cys222, Cys267/Cys317, Cys363/Cys412, Cys454/Cys502, and Cys546/Cys594. Ig-like C2-type domains are found at residues Pro246–Thr332, Pro342–Ile428, Pro433–Gln520, and Pro521–Ser610. 4 N-linked (GlcNAc...) asparagine glycosylation sites follow: Asn640, Asn699, Asn719, and Asn731. 4 disulfide bridges follow: Cys723–Cys885, Cys732–Cys748, Cys847–Cys857, and Cys851–Cys875. Asp826 serves as a coordination point for heme b. The active-site Proton acceptor is the His827. Asp828 serves as a coordination point for Ca(2+). N-linked (GlcNAc...) asparagine glycosylation is present at Asn865. Thr907, Tyr909, Asp911, and Ser913 together coordinate Ca(2+). Cysteines 959 and 970 form a disulfide. Residue Asn964 is glycosylated (N-linked (GlcNAc...) asparagine). Residues Glu980 and His1074 each coordinate heme b. One copy of the LRR 7 repeat lies at Ala1151–Val1175. Tyr1176 bears the Phosphotyrosine mark. Intrachain disulfides connect Cys1177-Cys1234 and Cys1275-Cys1301. An N-linked (GlcNAc...) asparagine glycan is attached at Asn1178. Ser1180 is modified (phosphoserine). Residues Leu1270–Val1291 form an LRR 8 repeat. Residues Asn1280, Asn1368, and Asn1425 are each glycosylated (N-linked (GlcNAc...) asparagine). A required in homotrimerization region spans residues Cys1315–Ser1411. The tract at residues Tyr1342–Ser1380 is disordered. Over residues His1365–Ser1380 the composition is skewed to polar residues. Residues Thr1413–Leu1471 enclose the VWFC domain.

This sequence belongs to the peroxidase family. XPO subfamily. As to quaternary structure, homotrimer; disulfide-linked. The homotrimer form is predominant. Homooligomer; disulfide-linked. Oligomerization occurs intracellularly before C-terminal proteolytic cleavage. Interacts with PXDNL; this interaction inhibits the peroxidase activity of PXDN. Ca(2+) serves as cofactor. It depends on heme b as a cofactor. In terms of processing, glycosylated. Four sites are completely N-glycosylated (Asn-640, Asn-731, Asn-865 and Asn-1425), whereas the others are found partially glycosylated. Processed by FURIN and the proteolytic processing largely depends on the peroxidase activity of PXDN. The proteolytic cleavage occurs after intracellular homotrimerization and releases into the extracellular matrix a large, catalytically active fragment and a smaller fragment consisting primarily of the C-terminal VWFC domain. The processing enhances both peroxidase activity and sulfilimine cross-links formation. In terms of tissue distribution, expressed at higher levels in heart, lung, ovary, spleen, intestine and placenta, and at lower levels in liver, colon, pancreas, kidney, thymus, skeletal muscle and prostate. Expressed in tumors such as melanoma, breast cancer, ovarian cancer and glioblastoma. A shorter form probably lacking the signal sequence is found in testis and in EB1 cells undergoing p53/TP53-dependent apoptosis.

It is found in the secreted. The protein localises to the extracellular space. It localises to the extracellular matrix. The protein resides in the endoplasmic reticulum. Its subcellular location is the cell surface. It is found in the basement membrane. It catalyses the reaction L-lysyl-[collagen] + L-methionyl-[collagen] + H2O2 = [collagen]-L-lysyl-N-S-L-methionyl-[collagen] + 2 H2O + H(+). The catalysed reaction is bromide + H2O2 = hypobromite + H2O. The enzyme catalyses L-lysyl-[collagen] + L-methionyl-[collagen] + hypobromite = [collagen]-L-lysyl-N-S-L-methionyl-[collagen] + bromide + H2O + H(+). It carries out the reaction L-tyrosyl-[protein] + bromide + H2O2 + H(+) = 3-bromo-L-tyrosyl-[protein] + 2 H2O. It catalyses the reaction hypobromite + L-tyrosyl-[protein] + H(+) = 3-bromo-L-tyrosyl-[protein] + H2O. Its activity is regulated as follows. The hypobromous acid formation is activated by increasing nitrite concentrations and inhibited by increasing urate concentrations. Functionally, catalyzes the two-electron oxidation of bromide by hydrogen peroxide and generates hypobromite as a reactive intermediate which mediates the formation of sulfilimine cross-links between methionine and hydroxylysine residues within an uncross-linked collagen IV/COL4A1 NC1 hexamer. In turns, directly contributes to the collagen IV network-dependent fibronectin/FN and laminin assembly, which is required for full extracellular matrix (ECM)-mediated signaling. Thus, sulfilimine cross-links are essential for growth factor-induced cell proliferation and survival in endothelial cells, an event essential to basement membrane integrity. In addition, through the bromide oxidation, may promote tubulogenesis and induce angiogenesis through ERK1/2, Akt, and FAK pathways. Moreover brominates alpha2 collagen IV chain/COL4A2 at 'Tyr-1485' and leads to bromine enrichment of the basement membranes. In vitro, can also catalyze the two-electron oxidation of thiocyanate and iodide and these two substrates could effectively compete with bromide and thus inhibit the formation of sulfilimine bonds. Binds laminins. May play a role in the organization of eyeball structure and lens development during eye development. The chain is Peroxidasin homolog from Homo sapiens (Human).